A 161-amino-acid chain; its full sequence is Nucleotide-binding protein Spea_3114 (161 aa).

The protein belongs to the YajQ family.

Functionally, nucleotide-binding protein. This chain is Nucleotide-binding protein Spea_3114, found in Shewanella pealeana (strain ATCC 700345 / ANG-SQ1).